The sequence spans 178 residues: Large ribosomal subunit protein uL6 (178 aa).

This sequence belongs to the universal ribosomal protein uL6 family. In terms of assembly, part of the 50S ribosomal subunit.

Functionally, this protein binds to the 23S rRNA, and is important in its secondary structure. It is located near the subunit interface in the base of the L7/L12 stalk, and near the tRNA binding site of the peptidyltransferase center. The sequence is that of Large ribosomal subunit protein uL6 from Corynebacterium kroppenstedtii (strain DSM 44385 / JCM 11950 / CIP 105744 / CCUG 35717).